A 247-amino-acid polypeptide reads, in one-letter code: LOB domain-containing protein 38 (247 aa).

The LOB domain maps to 1–107 (MSCNGCRVLR…VETVLRGGSL (107 aa)). Residues 157 to 170 (FSSSRSRSRSTASP) show a composition bias toward low complexity. Positions 157–184 (FSSSRSRSRSTASPPKRKRLSSEQQPSS) are disordered.

This sequence belongs to the LOB domain-containing protein family. Expressed in young shoots, roots, stems, leaves and flowers.

This Arabidopsis thaliana (Mouse-ear cress) protein is LOB domain-containing protein 38 (LBD38).